Consider the following 1078-residue polypeptide: Lon protease homolog, mitochondrial (1078 aa).

A mitochondrion-targeting transit peptide spans 1-27; sequence MIKASKCNKPRALFLVRVSIPRTFIRN. Over residues 71–123 the composition is skewed to basic and acidic residues; the sequence is SEKEKQPSTDKSNDKDKPSRKEKGKDKEKENEEKKDINMDEKYEINEETDTKP. Positions 71-179 are disordered; that stretch reads SEKEKQPSTD…KEFLSPSDSG (109 aa). Over residues 127 to 157 the composition is skewed to low complexity; sequence PNNPVSSKSNISSSSGGDNNNNNNNNNNNND. Positions 158-172 are enriched in basic and acidic residues; that stretch reads SDGKNDDGSPKDKEF. In terms of domain architecture, Lon N-terminal spans 182 to 400; the sequence is PPFLAIAMKD…LSLQLLQVEA (219 aa). 548-555 serves as a coordination point for ATP; it reads GPPGTGKT. The tract at residues 792–825 is disordered; it reads NSPIEYIQSNTEVKAETTTESQQEQEKEKEKDEE. A compositionally biased stretch (basic and acidic residues) spans 815–825; that stretch reads EQEKEKEKDEE. Residues 861–1049 form the Lon proteolytic domain; sequence TLNPGVATGL…SEVFEHLFQG (189 aa). Residues Ser-955 and Lys-998 contribute to the active site.

It belongs to the peptidase S16 family. As to quaternary structure, homohexamer or homoheptamer. Organized in a ring with a central cavity.

It is found in the mitochondrion matrix. The enzyme catalyses Hydrolysis of proteins in presence of ATP.. In terms of biological role, ATP-dependent serine protease that mediates the selective degradation of misfolded, unassembled or oxidatively damaged polypeptides as well as certain short-lived regulatory proteins in the mitochondrial matrix. May also have a chaperone function in the assembly of inner membrane protein complexes. Participates in the regulation of mitochondrial gene expression and in the maintenance of the integrity of the mitochondrial genome. Binds to mitochondrial DNA in a site-specific manner. The sequence is that of Lon protease homolog, mitochondrial from Candida albicans (strain SC5314 / ATCC MYA-2876) (Yeast).